We begin with the raw amino-acid sequence, 154 residues long: Ecotin-like protein 2 (154 aa).

This sequence belongs to the protease inhibitor I11 (ecotin) family.

In Trypanosoma brucei brucei (strain 927/4 GUTat10.1), this protein is Ecotin-like protein 2.